The chain runs to 231 residues: Probable transglycosylase SceD (231 aa).

Positions 1–27 (MKKTLLASSLAVGLGIVAGNAGHEAHA) are cleaved as a signal peptide. A disordered region spans residues 93 to 153 (SAQAPATNNV…ESKASEGSSV (61 aa)). The span at 96–116 (APATNNVAPSADQANQVQSQE) shows a compositional bias: polar residues. Residues 119–137 (APQNAQTQQPQASTSNNSQ) are compositionally biased toward low complexity. Positions 138 to 153 (VTATPTESKASEGSSV) are enriched in polar residues.

Belongs to the transglycosylase family. SceD subfamily.

It localises to the secreted. Functionally, is able to cleave peptidoglycan and affects clumping and separation of bacterial cells. The sequence is that of Probable transglycosylase SceD (sceD) from Staphylococcus aureus (strain bovine RF122 / ET3-1).